The sequence spans 63 residues: Large ribosomal subunit protein uL29 (63 aa).

The protein belongs to the universal ribosomal protein uL29 family.

The chain is Large ribosomal subunit protein uL29 from Aliarcobacter butzleri (strain RM4018) (Arcobacter butzleri).